A 520-amino-acid polypeptide reads, in one-letter code: GMP synthase [glutamine-hydrolyzing] (520 aa).

The 194-residue stretch at 9–202 (KILILDFGSQ…VRKICGCSGQ (194 aa)) folds into the Glutamine amidotransferase type-1 domain. Cys-86 (nucleophile) is an active-site residue. Catalysis depends on residues His-176 and Glu-178. Positions 203 to 395 (WTPGHIIDDA…LGLPHQMVWR (193 aa)) constitute a GMPS ATP-PPase domain. 230-236 (SGGVDSS) provides a ligand contact to ATP.

Homodimer.

It catalyses the reaction XMP + L-glutamine + ATP + H2O = GMP + L-glutamate + AMP + diphosphate + 2 H(+). It functions in the pathway purine metabolism; GMP biosynthesis; GMP from XMP (L-Gln route): step 1/1. Catalyzes the synthesis of GMP from XMP. This Geobacter metallireducens (strain ATCC 53774 / DSM 7210 / GS-15) protein is GMP synthase [glutamine-hydrolyzing].